We begin with the raw amino-acid sequence, 214 residues long: Thymidylate kinase (214 aa).

Residue 10-17 (GGEGAGKS) coordinates ATP.

It belongs to the thymidylate kinase family.

The catalysed reaction is dTMP + ATP = dTDP + ADP. Phosphorylation of dTMP to form dTDP in both de novo and salvage pathways of dTTP synthesis. The protein is Thymidylate kinase of Brucella abortus (strain S19).